A 232-amino-acid chain; its full sequence is Endonuclease V (232 aa).

Asp-43 and Asp-109 together coordinate Mg(2+).

The protein belongs to the endonuclease V family. Mg(2+) serves as cofactor.

It localises to the cytoplasm. The enzyme catalyses Endonucleolytic cleavage at apurinic or apyrimidinic sites to products with a 5'-phosphate.. DNA repair enzyme involved in the repair of deaminated bases. Selectively cleaves double-stranded DNA at the second phosphodiester bond 3' to a deoxyinosine leaving behind the intact lesion on the nicked DNA. In Thermofilum pendens (strain DSM 2475 / Hrk 5), this protein is Endonuclease V.